Reading from the N-terminus, the 252-residue chain is 14-3-3 protein 10 (252 aa).

This sequence belongs to the 14-3-3 family. Homodimer.

This Solanum lycopersicum (Tomato) protein is 14-3-3 protein 10 (TFT10).